Here is a 344-residue protein sequence, read N- to C-terminus: Phenylalanine--tRNA ligase alpha subunit (344 aa).

Residue E256 participates in Mg(2+) binding.

This sequence belongs to the class-II aminoacyl-tRNA synthetase family. Phe-tRNA synthetase alpha subunit type 1 subfamily. In terms of assembly, tetramer of two alpha and two beta subunits. It depends on Mg(2+) as a cofactor.

Its subcellular location is the cytoplasm. It catalyses the reaction tRNA(Phe) + L-phenylalanine + ATP = L-phenylalanyl-tRNA(Phe) + AMP + diphosphate + H(+). This is Phenylalanine--tRNA ligase alpha subunit from Geobacillus thermodenitrificans (strain NG80-2).